We begin with the raw amino-acid sequence, 225 residues long: Uracil-DNA glycosylase (225 aa).

D65 (proton acceptor) is an active-site residue.

It belongs to the uracil-DNA glycosylase (UDG) superfamily. UNG family.

The protein resides in the cytoplasm. It carries out the reaction Hydrolyzes single-stranded DNA or mismatched double-stranded DNA and polynucleotides, releasing free uracil.. In terms of biological role, excises uracil residues from the DNA which can arise as a result of misincorporation of dUMP residues by DNA polymerase or due to deamination of cytosine. This is Uracil-DNA glycosylase from Alkaliphilus oremlandii (strain OhILAs) (Clostridium oremlandii (strain OhILAs)).